A 250-amino-acid chain; its full sequence is Methylthioribulose-1-phosphate dehydratase (250 aa).

Cys103 contributes to the substrate binding site. Residues His121 and His123 each coordinate Zn(2+). Catalysis depends on Glu146, which acts as the Proton donor/acceptor. His211 provides a ligand contact to Zn(2+).

This sequence belongs to the aldolase class II family. MtnB subfamily. The cofactor is Zn(2+).

It is found in the cytoplasm. The enzyme catalyses 5-(methylsulfanyl)-D-ribulose 1-phosphate = 5-methylsulfanyl-2,3-dioxopentyl phosphate + H2O. It participates in amino-acid biosynthesis; L-methionine biosynthesis via salvage pathway; L-methionine from S-methyl-5-thio-alpha-D-ribose 1-phosphate: step 2/6. Its function is as follows. Catalyzes the dehydration of methylthioribulose-1-phosphate (MTRu-1-P) into 2,3-diketo-5-methylthiopentyl-1-phosphate (DK-MTP-1-P). This chain is Methylthioribulose-1-phosphate dehydratase, found in Clavispora lusitaniae (strain ATCC 42720) (Yeast).